Consider the following 145-residue polypeptide: MDWDYYTLLKTSVAIIIVFVVAKLITSSKSKKKTSVVPLPPVLQAWPPFIGSLIRFMKGPIVLLREEYPKLGSVFTVKLLHKNITFLIGPEVSSHFFNAYESELSQKEIYKFNVPTFGPGVVFDVDYPVRMEQFRFFSSALKVNN.

The helical transmembrane segment at 5-25 (YYTLLKTSVAIIIVFVVAKLI) threads the bilayer.

Belongs to the cytochrome P450 family. Expressed specifically in roots.

Its subcellular location is the membrane. This Arabidopsis thaliana (Mouse-ear cress) protein is Putative sterol 14-demethylase-like protein (CYP51G2).